The chain runs to 209 residues: Peroxiredoxin (209 aa).

The region spanning 2–156 (PLIGDKFPEM…IVRMIRAFRV (155 aa)) is the Thioredoxin domain. The active-site Cysteine sulfenic acid (-SOH) intermediate is the Cys44. Substrate is bound at residue Arg119. Cysteines 198 and 204 form a disulfide.

The protein belongs to the peroxiredoxin family. Prx6 subfamily. As to quaternary structure, homodecamer. Pentamer of dimers that assemble into a ring structure.

The protein resides in the cytoplasm. The enzyme catalyses a hydroperoxide + [thioredoxin]-dithiol = an alcohol + [thioredoxin]-disulfide + H2O. Functionally, thiol-specific peroxidase that catalyzes the reduction of hydrogen peroxide and organic hydroperoxides to water and alcohols, respectively. Plays a role in cell protection against oxidative stress by detoxifying peroxides. The polypeptide is Peroxiredoxin (Methanothermobacter thermautotrophicus (strain ATCC 29096 / DSM 1053 / JCM 10044 / NBRC 100330 / Delta H) (Methanobacterium thermoautotrophicum)).